Here is a 67-residue protein sequence, read N- to C-terminus: Large ribosomal subunit protein uL29 (67 aa).

The protein belongs to the universal ribosomal protein uL29 family.

The chain is Large ribosomal subunit protein uL29 from Methanosarcina acetivorans (strain ATCC 35395 / DSM 2834 / JCM 12185 / C2A).